Reading from the N-terminus, the 466-residue chain is Prophage integrase IntF (466 aa).

One can recognise a Core-binding (CB) domain in the interval 134–239 (KTKVTFSVAW…LLRAFIKWSN (106 aa)). A Tyr recombinase domain is found at 268–445 (KADDCLQKEQ…PLDLLRKWHE (178 aa)). Catalysis depends on residues R306, K328, H396, R399, and H422. Y432 functions as the O-(3'-phospho-DNA)-tyrosine intermediate in the catalytic mechanism.

The protein belongs to the 'phage' integrase family.

Integrase is necessary for integration of the phage into the host genome by site-specific recombination. In conjunction with excisionase, integrase is also necessary for excision of the prophage from the host genome. This Escherichia coli (strain K12) protein is Prophage integrase IntF (intF).